The chain runs to 865 residues: DNA-directed RNA polymerase subunit Rpo1N (865 aa).

The Zn(2+) site is built by Cys60, Cys63, Cys70, His73, Cys100, Cys103, Cys146, and Cys149. Mg(2+)-binding residues include Asp451, Asp453, and Asp455. A disordered region spans residues 500–531 (EHTSSQGKRLFSVRSRPPDPQEGRAPPPDREG). Basic and acidic residues predominate over residues 515 to 531 (RPPDPQEGRAPPPDREG).

This sequence belongs to the RNA polymerase beta' chain family. In terms of assembly, part of the RNA polymerase complex. The cofactor is Mg(2+). It depends on Zn(2+) as a cofactor.

The protein localises to the cytoplasm. It carries out the reaction RNA(n) + a ribonucleoside 5'-triphosphate = RNA(n+1) + diphosphate. In terms of biological role, DNA-dependent RNA polymerase (RNAP) catalyzes the transcription of DNA into RNA using the four ribonucleoside triphosphates as substrates. Forms the clamp head domain. In Methanothermobacter thermautotrophicus (strain Winter) (Methanobacterium thermoautotrophicum), this protein is DNA-directed RNA polymerase subunit Rpo1N.